Here is a 340-residue protein sequence, read N- to C-terminus: Mitochondrial distribution and morphology protein 12 (340 aa).

The SMP-LTD domain occupies 1–321 (MSIDLDWDGM…WPSWIKVSME (321 aa)). Disordered stretches follow at residues 79 to 107 (HYLP…TNPI), 161 to 184 (SVRE…EDRE), and 319 to 340 (SMED…EDEH). The segment covering 89–106 (QRRSAPSTPHIHTNTTNP) has biased composition (polar residues). Residues 321-340 (EDEDSDDEEGEEEGDQEDEH) are compositionally biased toward acidic residues.

The protein belongs to the MDM12 family. Component of the ER-mitochondria encounter structure (ERMES) or MDM complex, composed of MMM1, MDM10, MDM12 and MDM34. An MMM1 homodimer associates with one molecule of MDM12 on each side in a pairwise head-to-tail manner, and the SMP-LTD domains of MMM1 and MDM12 generate a continuous hydrophobic tunnel for phospholipid trafficking.

It is found in the mitochondrion outer membrane. The protein resides in the endoplasmic reticulum membrane. Component of the ERMES/MDM complex, which serves as a molecular tether to connect the endoplasmic reticulum (ER) and mitochondria. Components of this complex are involved in the control of mitochondrial shape and protein biogenesis, and function in nonvesicular lipid trafficking between the ER and mitochondria. MDM12 is required for the interaction of the ER-resident membrane protein MMM1 and the outer mitochondrial membrane-resident beta-barrel protein MDM10. The MDM12-MMM1 subcomplex functions in the major beta-barrel assembly pathway that is responsible for biogenesis of all mitochondrial outer membrane beta-barrel proteins, and acts in a late step after the SAM complex. The MDM10-MDM12-MMM1 subcomplex further acts in the TOM40-specific pathway after the action of the MDM12-MMM1 complex. Essential for establishing and maintaining the structure of mitochondria and maintenance of mtDNA nucleoids. This chain is Mitochondrial distribution and morphology protein 12, found in Yarrowia lipolytica (strain CLIB 122 / E 150) (Yeast).